Reading from the N-terminus, the 568-residue chain is Urease subunit alpha (568 aa).

A Urease domain is found at 130–568 (GGIDSHIHFI…LPMAQRYFLF (439 aa)). Ni(2+) contacts are provided by His135, His137, and Lys218. Lys218 carries the N6-carboxylysine modification. His220 lines the substrate pocket. His247 and His273 together coordinate Ni(2+). Residue His321 is the Proton donor of the active site. A Ni(2+)-binding site is contributed by Asp361.

The protein belongs to the metallo-dependent hydrolases superfamily. Urease alpha subunit family. In terms of assembly, heterotrimer of UreA (gamma), UreB (beta) and UreC (alpha) subunits. Three heterotrimers associate to form the active enzyme. Ni cation serves as cofactor. In terms of processing, carboxylation allows a single lysine to coordinate two nickel ions.

It is found in the cytoplasm. It catalyses the reaction urea + 2 H2O + H(+) = hydrogencarbonate + 2 NH4(+). It participates in nitrogen metabolism; urea degradation; CO(2) and NH(3) from urea (urease route): step 1/1. The chain is Urease subunit alpha from Nitrosospira multiformis (strain ATCC 25196 / NCIMB 11849 / C 71).